The chain runs to 466 residues: Ribulose bisphosphate carboxylase large chain (466 aa).

At Lys5 the chain carries N6,N6,N6-trimethyllysine. Substrate contacts are provided by Asn114 and Thr164. The active-site Proton acceptor is the Lys166. Lys168 is a substrate binding site. Residues Lys192, Asp194, and Glu195 each coordinate Mg(2+). Lys192 bears the N6-carboxylysine mark. His285 (proton acceptor) is an active-site residue. Substrate contacts are provided by Arg286, His318, and Ser370.

The protein belongs to the RuBisCO large chain family. Type I subfamily. In terms of assembly, heterohexadecamer of 8 large chains and 8 small chains; disulfide-linked. The disulfide link is formed within the large subunit homodimers. Requires Mg(2+) as cofactor. In terms of processing, the disulfide bond which can form in the large chain dimeric partners within the hexadecamer appears to be associated with oxidative stress and protein turnover.

The protein localises to the plastid. It is found in the chloroplast. It catalyses the reaction 2 (2R)-3-phosphoglycerate + 2 H(+) = D-ribulose 1,5-bisphosphate + CO2 + H2O. It carries out the reaction D-ribulose 1,5-bisphosphate + O2 = 2-phosphoglycolate + (2R)-3-phosphoglycerate + 2 H(+). Functionally, ruBisCO catalyzes two reactions: the carboxylation of D-ribulose 1,5-bisphosphate, the primary event in carbon dioxide fixation, as well as the oxidative fragmentation of the pentose substrate in the photorespiration process. Both reactions occur simultaneously and in competition at the same active site. The sequence is that of Ribulose bisphosphate carboxylase large chain from Berzelia lanuginosa (Buttonbush).